A 595-amino-acid polypeptide reads, in one-letter code: Tumor necrosis factor receptor superfamily member 8 (595 aa).

A signal peptide spans 1-18; it reads MRVLLAALGLLFLGALRA. Topologically, residues 19–385 are extracellular; it reads FPQDRPFEDT…STGKPVLDAG (367 aa). TNFR-Cys repeat units lie at residues 28–66, 68–106, and 107–150; these read TCHGNPSHYYDKAVRRCCYRCPMGLFPTQQCPQRPTDCR, QCEPDYYLDEADRCTACVTCSRDDLVEKTPCAWNSSRVC, and ECRP…TVCE. Disulfide bonds link Cys-29–Cys-44, Cys-45–Cys-58, Cys-48–Cys-65, Cys-69–Cys-81, Cys-84–Cys-98, Cys-87–Cys-106, Cys-108–Cys-122, and Cys-131–Cys-149. The N-linked (GlcNAc...) asparagine glycan is linked to Asn-32. Asn-101 carries N-linked (GlcNAc...) asparagine glycosylation. The segment at 167–238 is disordered; sequence KEPSSGTIPQ…PTQPCPEGSG (72 aa). Low complexity predominate over residues 179–194; the sequence is PTPVSPATSSASTMPV. TNFR-Cys repeat units follow at residues 205–241, 243–281, and 282–325; these read ASKLTRAPDSPSSVGRPSSDPGLSPTQPCPEGSGDCR, QCEPDYYLDEAGRCTACVSCSRDDLVEKTPCAWNSSRTC, and ECRP…TTFE. 6 cysteine pairs are disulfide-bonded: Cys-233–Cys-240, Cys-244–Cys-256, Cys-259–Cys-273, Cys-262–Cys-281, Cys-283–Cys-297, and Cys-289–Cys-300. Asn-276 carries an N-linked (GlcNAc...) asparagine glycan. Residues 323 to 355 are disordered; the sequence is TFEAPPLGTQPDCNPTPENGEAPASTSPTQSLL. Residue Asn-336 is glycosylated (N-linked (GlcNAc...) asparagine). The segment covering 346 to 355 has biased composition (polar residues); sequence ASTSPTQSLL. The chain crosses the membrane as a helical span at residues 386 to 406; sequence PVLFWVILVLVVVVGSSAFLL. The Cytoplasmic segment spans residues 407 to 595; it reads CHRRACRKRI…DPLPTAASGK (189 aa). Phosphoserine occurs at positions 438 and 452. Disordered stretches follow at residues 438–457, 485–509, and 536–595; these read SRPRRSSTQLRSGASVTEPV, LQDASPAGGPSSPRDLPEPRVSTEH, and EGRG…ASGK. Polar residues predominate over residues 443–452; it reads SSTQLRSGAS. Over residues 499 to 509 the composition is skewed to basic and acidic residues; it reads DLPEPRVSTEH.

The protein belongs to the TNFR8 family. In terms of assembly, interacts with TRAF1, TRAF2, TRAF3 and TRAF5. Phosphorylated on serine and tyrosine residues. Isoform 2 is constitutively phosphorylated. In terms of tissue distribution, detected in alveolar macrophages (at protein level).

Its subcellular location is the cell membrane. The protein resides in the cytoplasm. Functionally, receptor for TNFSF8/CD30L. May play a role in the regulation of cellular growth and transformation of activated lymphoblasts. Regulates gene expression through activation of NF-kappa-B. The polypeptide is Tumor necrosis factor receptor superfamily member 8 (Homo sapiens (Human)).